The following is a 745-amino-acid chain: uncharacterized protein (745 aa).

The HTH araC/xylS-type domain maps to 158 to 256 (NQVCDYIELH…HQTPKQYRGD (99 aa)). DNA-binding regions (H-T-H motif) lie at residues 175–196 (SELS…TESL) and 223–246 (ITDI…KHFT).

This is an uncharacterized protein from Staphylococcus aureus (strain MW2).